The following is a 69-amino-acid chain: MSQPNSQQPTIVKCPTCQNKVVWNTESEFRPFCSKKCQMIDFGEWADEEKSIAGAPDMSDSDGWSSEPY.

The Zn(2+) site is built by C14, C17, C33, and C37.

Belongs to the DNA gyrase inhibitor YacG family. In terms of assembly, interacts with GyrB. Zn(2+) is required as a cofactor.

Its function is as follows. Inhibits all the catalytic activities of DNA gyrase by preventing its interaction with DNA. Acts by binding directly to the C-terminal domain of GyrB, which probably disrupts DNA binding by the gyrase. This Aliivibrio salmonicida (strain LFI1238) (Vibrio salmonicida (strain LFI1238)) protein is DNA gyrase inhibitor YacG.